Here is a 643-residue protein sequence, read N- to C-terminus: Translation factor GUF1, mitochondrial (643 aa).

The N-terminal 18 residues, 1 to 18 (MLASQAIKRIFHRSWKPL), are a transit peptide targeting the mitochondrion. The tr-type G domain occupies 43–226 (ENYRNFSIVA…AIIDRIPPPT (184 aa)). GTP contacts are provided by residues 52–59 (AHIDHGKS), 118–122 (DTPGH), and 172–175 (NKID).

This sequence belongs to the TRAFAC class translation factor GTPase superfamily. Classic translation factor GTPase family. LepA subfamily.

The protein resides in the mitochondrion inner membrane. It catalyses the reaction GTP + H2O = GDP + phosphate + H(+). In terms of biological role, promotes mitochondrial protein synthesis. May act as a fidelity factor of the translation reaction, by catalyzing a one-codon backward translocation of tRNAs on improperly translocated ribosomes. Binds to mitochondrial ribosomes in a GTP-dependent manner. This is Translation factor GUF1, mitochondrial from Zygosaccharomyces rouxii (strain ATCC 2623 / CBS 732 / NBRC 1130 / NCYC 568 / NRRL Y-229).